A 65-amino-acid chain; its full sequence is MSKLKTRKSAAKRFKATATGKFTRRRAFHNHLLDHKSSKLKRHLKTKAVVDERDADNVKLMIPYA.

The protein belongs to the bacterial ribosomal protein bL35 family.

In Prochlorococcus marinus subsp. pastoris (strain CCMP1986 / NIES-2087 / MED4), this protein is Large ribosomal subunit protein bL35.